A 370-amino-acid chain; its full sequence is tRNA-specific 2-thiouridylase MnmA (370 aa).

ATP contacts are provided by residues 24–31 (AMSGGVDS) and Leu50. Catalysis depends on Cys118, which acts as the Nucleophile. The cysteines at positions 118 and 214 are disulfide-linked. Residue Gly142 participates in ATP binding. The segment at 164 to 166 (KDQ) is interaction with tRNA. Cys214 (cysteine persulfide intermediate) is an active-site residue.

This sequence belongs to the MnmA/TRMU family.

It is found in the cytoplasm. The catalysed reaction is S-sulfanyl-L-cysteinyl-[protein] + uridine(34) in tRNA + AH2 + ATP = 2-thiouridine(34) in tRNA + L-cysteinyl-[protein] + A + AMP + diphosphate + H(+). Its function is as follows. Catalyzes the 2-thiolation of uridine at the wobble position (U34) of tRNA, leading to the formation of s(2)U34. This Ehrlichia ruminantium (strain Gardel) protein is tRNA-specific 2-thiouridylase MnmA.